The sequence spans 310 residues: Glutaminase 1 (310 aa).

Positions 66, 117, 161, 168, 192, 244, and 262 each coordinate substrate. Lysine 294 is subject to N6-acetyllysine.

Belongs to the glutaminase family. As to quaternary structure, homotetramer.

It carries out the reaction L-glutamine + H2O = L-glutamate + NH4(+). This chain is Glutaminase 1, found in Escherichia coli O157:H7.